The sequence spans 422 residues: Zinc-regulated transporter 2 (422 aa).

Residues 1–27 (MVDLIARDDSVDTCQASNGYNGHAGLR) are Extracellular-facing. A helical membrane pass occupies residues 28-48 (ILAVFIILISSGLGVYFPILS). The Cytoplasmic portion of the chain corresponds to 49-60 (SRYSFIRLPNWC). Residues 61–81 (FFIAKFFGSGVIVATAFVHLL) form a helical membrane-spanning segment. The Extracellular portion of the chain corresponds to 82–99 (QPAAEALGDECLGGTFAE). Residues 100 to 120 (YPWAFGICLMSLFLLFFTEII) traverse the membrane as a helical segment. The Cytoplasmic portion of the chain corresponds to 121-262 (THYFVAKTLG…EEDKEQYLNQ (142 aa)). Phosphoserine is present on residues Ser148, Ser149, Ser162, and Ser170. At Thr188 the chain carries Phosphothreonine. The helical transmembrane segment at 263-283 (ILAVFILEFGIIFHSVFVGLS) threads the bilayer. The Extracellular portion of the chain corresponds to 284–290 (LSVAGEE). The chain crosses the membrane as a helical span at residues 291 to 311 (FETLFIVLTFHQMFEGLGLGT). At 312–326 (RVAETNWPESKKYMP) the chain is on the cytoplasmic side. The chain crosses the membrane as a helical span at residues 327 to 347 (WLMGLAFTLTSPIAVAVGIGV). Residues 348–358 (RHSWIPGSRRA) are Extracellular-facing. The helical transmembrane segment at 359-379 (LIANGVFDSISSGILIYTGLV) threads the bilayer. At 380-400 (ELMAHEFLYSNQFKGPDGLKK) the chain is on the cytoplasmic side. A helical transmembrane segment spans residues 401–421 (MLSAYLIMCCGAALMALLGKW). Position 422 (Ala422) is a topological domain, extracellular.

The protein belongs to the ZIP transporter (TC 2.A.5) family.

It is found in the membrane. Functionally, low-affinity zinc transport protein. Active in zinc-replete cells and is time-, temperature- and concentration-dependent and prefers zinc over other metals as its substrate. This chain is Zinc-regulated transporter 2 (ZRT2), found in Saccharomyces cerevisiae (strain ATCC 204508 / S288c) (Baker's yeast).